A 160-amino-acid chain; its full sequence is Phosphopantetheine adenylyltransferase (160 aa).

Ser-9 lines the substrate pocket. Residues 9-10 (SL) and His-17 contribute to the ATP site. Lys-41, Leu-74, and Lys-88 together coordinate substrate. Residues 89 to 91 (GIR), Glu-99, and 123 to 129 (YLHLSST) each bind ATP.

This sequence belongs to the bacterial CoaD family. In terms of assembly, homohexamer. Requires Mg(2+) as cofactor.

The protein resides in the cytoplasm. The catalysed reaction is (R)-4'-phosphopantetheine + ATP + H(+) = 3'-dephospho-CoA + diphosphate. The protein operates within cofactor biosynthesis; coenzyme A biosynthesis; CoA from (R)-pantothenate: step 4/5. Its function is as follows. Reversibly transfers an adenylyl group from ATP to 4'-phosphopantetheine, yielding dephospho-CoA (dPCoA) and pyrophosphate. In Renibacterium salmoninarum (strain ATCC 33209 / DSM 20767 / JCM 11484 / NBRC 15589 / NCIMB 2235), this protein is Phosphopantetheine adenylyltransferase.